Consider the following 1025-residue polypeptide: Interferon-induced helicase C domain-containing protein 1 (1025 aa).

2 CARD domains span residues 7–97 (AEDS…YVKP) and 110–190 (AHDE…QTGN). Residues K23 and K43 each participate in a glycyl lysine isopeptide (Lys-Gly) (interchain with G-Cter in ISG15) cross-link. A disordered region spans residues 273–297 (SLGHNSNMGRDSGTMGSDSDESVIQ). The segment covering 275-297 (GHNSNMGRDSGTMGSDSDESVIQ) has biased composition (polar residues). Phosphoserine occurs at positions 289, 291, and 302. A Helicase ATP-binding domain is found at 317–510 (AQPALDGKNI…SEAEKHILNI (194 aa)). Phosphoserine is present on residues S645 and S648. The Helicase C-terminal domain maps to 700-872 (KLIKLRNTIL…NMKPEEYAHK (173 aa)). Phosphoserine; by RIOK3 is present on S828. The 128-residue stretch at 893 to 1020 (AKQYNDNPSL…PDLDYSEYCL (128 aa)) folds into the RLR CTR domain. Residues C907, C910, C962, and C964 each coordinate Zn(2+).

It belongs to the helicase family. RLR subfamily. Monomer in the absence of ligands and homodimerizes in the presence of dsRNA ligands. Can assemble into helical or linear polymeric filaments on long dsRNA. Interacts with MAVS/IPS1. Interacts (via the CARD domains) with TKFC, the interaction is inhibited by viral infection. Interacts with PCBP2. Interacts with NLRC5. Interacts with PIAS2-beta. Interacts with DDX60. Interacts with ANKRD17. Interacts with IKBKE. Interacts with ATG5 and ATG12, either as ATG5 and ATG12 monomers or as ATG12-ATG5 conjugates. Interacts with ZCCHC3; leading to activate IFIH1/MDA5. Interacts with RNF123. Interacts with DDX3X. Interacts with NOD1; this interaction promotes transcription of antiviral genes and inhibition of viral replication. Interacts with ECSIT; this interaction bridges IFIH1 to the MAVS complex at the mitochondrion. Post-translationally, during apoptosis, processed into 3 cleavage products. The helicase-containing fragment, once liberated from the CARD domains, translocate from the cytoplasm to the nucleus. The processed protein significantly sensitizes cells to DNA degradation. Sumoylated. Sumoylation positively regulates its role in type I interferon induction and is enhanced by PIAS2-beta. In terms of processing, ubiquitinated by RNF125, leading to its degradation by the proteasome. USP17/UPS17L2-dependent deubiquitination positively regulates the receptor. Ubiquitinated by TRIM25 via 'Lys-63'-linked ubiquitination, promoting activation of IFIH1/MDA5. Ubiquitinated by TRIM40 via 'Lys-48'-linked ubiquitination; leading to proteasomal degradation. Ubiquitinated by TRIM65 via 'Lys-63'-linked ubiquitination, promoting activation of IFIH1/MDA5. Post-translationally, ISGylated by ISG15. ISGylation increases upon infection with viruses. ISGylation at Lys-23 and Lys-43 is dependent of dephosphorylation, regulates mitochondrial translocation and oligomerization. Essential for IFIH1/MDA5-mediated cytokine responses and restriction of virus replication. Phosphorylated. Dephosphorylated by phsophatases PP1; dephosphorylation precedes and is required for ISGylation. Expression is prominent in lung, liver, kidney, heart and spleen (at protein level). Widely expressed at low level.

It is found in the cytoplasm. The protein resides in the nucleus. Its subcellular location is the mitochondrion. The enzyme catalyses ATP + H2O = ADP + phosphate + H(+). Functionally, innate immune receptor which acts as a cytoplasmic sensor of viral nucleic acids and plays a major role in sensing viral infection and in the activation of a cascade of antiviral responses including the induction of type I interferons and pro-inflammatory cytokines. Its ligands include mRNA lacking 2'-O-methylation at their 5' cap and long-dsRNA (&gt;1 kb in length). Upon ligand binding it associates with mitochondria antiviral signaling protein (MAVS/IPS1) which activates the IKK-related kinases: TBK1 and IKBKE which phosphorylate interferon regulatory factors: IRF3 and IRF7 which in turn activate transcription of antiviral immunological genes, including interferons (IFNs); IFN-alpha and IFN-beta. Responsible for detecting the Picornaviridae family members such as encephalomyocarditis virus (EMCV), mengo encephalomyocarditis virus (ENMG), and theiler's murine encephalomyelitis virus (TMEV). Can also detect other viruses such as dengue virus (DENV), west Nile virus (WNV), and reovirus. Also involved in antiviral signaling in response to viruses containing a dsDNA genome, such as vaccinia virus. Plays an important role in amplifying innate immune signaling through recognition of RNA metabolites that are produced during virus infection by ribonuclease L (RNase L). May play an important role in enhancing natural killer cell function and may be involved in growth inhibition and apoptosis in several tumor cell lines. The protein is Interferon-induced helicase C domain-containing protein 1 of Mus musculus (Mouse).